The following is a 132-amino-acid chain: Salivary cystatin-L2 (132 aa).

A signal peptide spans 1-18 (MTSSLALVLVFGGAAVCA). The 90-residue stretch at 28–117 (ERSNQDDPEY…RTCTTVIYRN (90 aa)) folds into the Cystatin domain. A required for interaction with mouse ANXA2 region spans residues 87 to 131 (TCELTSTYNKDTCQANANAAQRTCTTVIYRNLQGEKSISSFECAA). 2 disulfides stabilise this stretch: Cys88–Cys99 and Cys110–Cys129.

The protein belongs to the cystatin family. Monomer. Interacts (via loop 2) with mouse ANXA2; the interaction results in reduced activation of mouse NLRC4 inflammasome formation upon Anaplasma phagocytophilum infection. As to expression, detected in salivary gland and midgut.

The protein resides in the secreted. Its function is as follows. Contributes to the suppression of the host's immune response to tick salivary proteins and is important for successful feeding on hosts. Inhibitor of cysteine proteinases. Inhibits host immune responses, probably via its inhibition of host cathepsins. Inhibits host papain (in vitro). Inhibits host cathepsin L (CTSL) (in vitro). Inhibits host cathepsin L2 (CTSV) (in vitro). Attenuates IFN-beta (IFNB1)-triggered JAK/STAT signaling pathway in mouse dendritic cells. Suppresses induction of interferon-stimulated gene IRF7 and production of CXCL10 in lipopolysaccharide (LPS)-activated dendritic cells. Functionally, (Microbial infection) Down-regulates TLR2-mediated host responses to infection by Borrelia burgdorferi and the production of chemokines CCL3 and CXCL10 by host dendritic cells. Enhances infection by the tick-transmitted pathogen B.burgdorferi (in vitro). (Microbial infection) Inhibits host inflammatory responses to Anaplasma phagocytophilum infection. Interacts with mouse ANXA2 and suppresses oligomerization of NLRC4, a key component of host inflammasomes that sense A.phagocytophilum infection. Indirectly targets caspase-1 (CASP1) activation and subsequent IL-1beta (IL1B) and IL18 release by inhibiting reactive oxygen species (ROS) production from NADPH oxidase complex in A.phagocytophilum-infected mouse macrophages. In terms of biological role, (Microbial infection) Promotes replication of tick-borne encephalitis virus in mouse dendritic cells and reduces anti-viral effect of host IFN-beta (IFNB1). The polypeptide is Salivary cystatin-L2 (Ixodes scapularis (Black-legged tick)).